Consider the following 141-residue polypeptide: Nucleoside diphosphate kinase (141 aa).

Residues Lys-11, Phe-59, Arg-87, Thr-93, Arg-104, and Asn-114 each contribute to the ATP site. His-117 acts as the Pros-phosphohistidine intermediate in catalysis.

It belongs to the NDK family. Homotetramer. Requires Mg(2+) as cofactor.

The protein resides in the cytoplasm. The catalysed reaction is a 2'-deoxyribonucleoside 5'-diphosphate + ATP = a 2'-deoxyribonucleoside 5'-triphosphate + ADP. It catalyses the reaction a ribonucleoside 5'-diphosphate + ATP = a ribonucleoside 5'-triphosphate + ADP. Major role in the synthesis of nucleoside triphosphates other than ATP. The ATP gamma phosphate is transferred to the NDP beta phosphate via a ping-pong mechanism, using a phosphorylated active-site intermediate. This chain is Nucleoside diphosphate kinase, found in Variovorax paradoxus (strain S110).